We begin with the raw amino-acid sequence, 242 residues long: Leucyl/phenylalanyl-tRNA--protein transferase (242 aa).

Belongs to the L/F-transferase family.

The protein resides in the cytoplasm. It carries out the reaction N-terminal L-lysyl-[protein] + L-leucyl-tRNA(Leu) = N-terminal L-leucyl-L-lysyl-[protein] + tRNA(Leu) + H(+). The catalysed reaction is N-terminal L-arginyl-[protein] + L-leucyl-tRNA(Leu) = N-terminal L-leucyl-L-arginyl-[protein] + tRNA(Leu) + H(+). It catalyses the reaction L-phenylalanyl-tRNA(Phe) + an N-terminal L-alpha-aminoacyl-[protein] = an N-terminal L-phenylalanyl-L-alpha-aminoacyl-[protein] + tRNA(Phe). Functionally, functions in the N-end rule pathway of protein degradation where it conjugates Leu, Phe and, less efficiently, Met from aminoacyl-tRNAs to the N-termini of proteins containing an N-terminal arginine or lysine. This is Leucyl/phenylalanyl-tRNA--protein transferase from Edwardsiella ictaluri (strain 93-146).